The sequence spans 750 residues: Ribosomal RNA large subunit methyltransferase K/L (750 aa).

The region spanning 46-157 (TAYRLCLWSR…RGEAILSLDL (112 aa)) is the THUMP domain.

Belongs to the methyltransferase superfamily. RlmKL family.

The protein localises to the cytoplasm. The catalysed reaction is guanosine(2445) in 23S rRNA + S-adenosyl-L-methionine = N(2)-methylguanosine(2445) in 23S rRNA + S-adenosyl-L-homocysteine + H(+). It catalyses the reaction guanosine(2069) in 23S rRNA + S-adenosyl-L-methionine = N(2)-methylguanosine(2069) in 23S rRNA + S-adenosyl-L-homocysteine + H(+). In terms of biological role, specifically methylates the guanine in position 2445 (m2G2445) and the guanine in position 2069 (m7G2069) of 23S rRNA. The chain is Ribosomal RNA large subunit methyltransferase K/L from Pseudomonas syringae pv. tomato (strain ATCC BAA-871 / DC3000).